The chain runs to 127 residues: Fumarate reductase subunit C (127 aa).

3 helical membrane passes run Ala30–Val50, Gly58–Gly78, and Ile107–Val127.

This sequence belongs to the FrdC family. In terms of assembly, part of an enzyme complex containing four subunits: a flavoprotein (FrdA), an iron-sulfur protein (FrdB), and two hydrophobic anchor proteins (FrdC and FrdD).

Its subcellular location is the cell inner membrane. Its function is as follows. Anchors the catalytic components of the fumarate reductase complex to the cell membrane, binds quinones. In Vibrio atlanticus (strain LGP32) (Vibrio splendidus (strain Mel32)), this protein is Fumarate reductase subunit C.